We begin with the raw amino-acid sequence, 454 residues long: Tubulin alpha chain (454 aa).

The GTP site is built by Gln12, Asp72, Ser141, Gly145, Thr146, Thr180, Asn207, and Asn229. Asp72 is a binding site for Mg(2+). Glu255 is an active-site residue.

It belongs to the tubulin family. In terms of assembly, dimer of alpha and beta chains. A typical microtubule is a hollow water-filled tube with an outer diameter of 25 nm and an inner diameter of 15 nM. Alpha-beta heterodimers associate head-to-tail to form protofilaments running lengthwise along the microtubule wall with the beta-tubulin subunit facing the microtubule plus end conferring a structural polarity. Microtubules usually have 13 protofilaments but different protofilament numbers can be found in some organisms and specialized cells. The cofactor is Mg(2+).

It localises to the cytoplasm. The protein resides in the cytoskeleton. It carries out the reaction GTP + H2O = GDP + phosphate + H(+). Tubulin is the major constituent of microtubules, a cylinder consisting of laterally associated linear protofilaments composed of alpha- and beta-tubulin heterodimers. Microtubules grow by the addition of GTP-tubulin dimers to the microtubule end, where a stabilizing cap forms. Below the cap, tubulin dimers are in GDP-bound state, owing to GTPase activity of alpha-tubulin. The sequence is that of Tubulin alpha chain (TUB1) from Colletotrichum orbiculare (strain 104-T / ATCC 96160 / CBS 514.97 / LARS 414 / MAFF 240422) (Cucumber anthracnose fungus).